We begin with the raw amino-acid sequence, 1191 residues long: Homeodomain-interacting protein kinase 3 (1191 aa).

Lys27 participates in a covalent cross-link: Glycyl lysine isopeptide (Lys-Gly) (interchain with G-Cter in SUMO2). Residues 197-525 enclose the Protein kinase domain; it reads YEVLDFLGRG…PIETLNHPFV (329 aa). ATP contacts are provided by residues 203-211 and Lys226; that span reads LGRGTFGQV. Residue Asp322 is the Proton acceptor of the active site. Position 359 is a phosphotyrosine (Tyr359). Positions 766 to 920 are interaction with AR; that stretch reads QNRSNSLQNT…NSMSDDEQES (155 aa). The segment at 774–867 is interaction with FAS; that stretch reads NTNVPHSAFI…SPRPSLRECK (94 aa). Residues 801 to 828 form a disordered region; sequence TQDNHTSEGEARTCHEASVRQDSSVSDK. Residues 802 to 828 show a composition bias toward basic and acidic residues; sequence QDNHTSEGEARTCHEASVRQDSSVSDK. Residues 846–856 form an interaction with UBL1 region; that stretch reads ITISSDTDDEE. Over residues 888–905 the composition is skewed to low complexity; that stretch reads SSPDSTLSTSSSGQSSPS. Disordered regions lie at residues 888–960 and 993–1022; these read SSPD…TCAG and TCQPLTKGQPAPGKLNQPSASAARQQKPTS. Positions 1008–1022 are enriched in polar residues; that stretch reads NQPSASAARQQKPTS.

Belongs to the protein kinase superfamily. CMGC Ser/Thr protein kinase family. HIPK subfamily. As to quaternary structure, interacts with Nkx1-2. Interacts with FAS and DAXX. Probably part of a complex consisting of HIPK3, FAS and FADD. Interacts with UBL1/SUMO-1. Interacts with and stabilizes ligand-bound androgen receptor (AR). Autophosphorylated. Autophosphorylation is not required for catalytic activity. In terms of processing, may be sumoylated.

It localises to the nucleus. The catalysed reaction is L-seryl-[protein] + ATP = O-phospho-L-seryl-[protein] + ADP + H(+). It carries out the reaction L-threonyl-[protein] + ATP = O-phospho-L-threonyl-[protein] + ADP + H(+). Seems to negatively regulate apoptosis by promoting FADD phosphorylation. Enhances androgen receptor-mediated transcription. May act as a transcriptional corepressor for NK homeodomain transcription factors. This is Homeodomain-interacting protein kinase 3 (Hipk3) from Rattus norvegicus (Rat).